The sequence spans 345 residues: GTPase Obg (345 aa).

One can recognise an Obg domain in the interval 1–158; it reads MFIDSVKITL…RLVRLELKLI (158 aa). The region spanning 159–339 is the OBG-type G domain; it reads ADVGLVGFPN…LKFMLLEEIK (181 aa). GTP contacts are provided by residues 165 to 172, 190 to 194, 212 to 215, 280 to 283, and 320 to 322; these read GFPNVGKS, FTTLT, DIPG, SKSD, and SSL. 2 residues coordinate Mg(2+): serine 172 and threonine 192.

The protein belongs to the TRAFAC class OBG-HflX-like GTPase superfamily. OBG GTPase family. As to quaternary structure, monomer. Requires Mg(2+) as cofactor.

The protein localises to the cytoplasm. An essential GTPase which binds GTP, GDP and possibly (p)ppGpp with moderate affinity, with high nucleotide exchange rates and a fairly low GTP hydrolysis rate. Plays a role in control of the cell cycle, stress response, ribosome biogenesis and in those bacteria that undergo differentiation, in morphogenesis control. The chain is GTPase Obg from Campylobacter jejuni subsp. doylei (strain ATCC BAA-1458 / RM4099 / 269.97).